Reading from the N-terminus, the 473-residue chain is MVAKTLYDKLWDAHLVHESDDGSALIYIDRHIVHEVTSPQAFDGLRMAGRKPWRVDSILATPDHNVPTTQKERAHGVSGIQDPVSLIQVQTLDDNCDEFGITEFKINDSRQGIVHVVGPESGACLPGMTIVCGDSHTATNGALGALAHGIGTSEVEHVMATQCLVAKKMKNMLIKVDGTLGLGVTPKDVVLAIIAKIGTAGGTGYAMEFGGQVFRDMSMEGRLTVCNMAIEAGARAGMVAVDQTTIDYVKGRPYAPSGDVWEQAVANWRELVSDEGAHFDAVIEIDGASIRPQVSWGTSPEMVVSVEDKVPDPANEPDPVKRKDMIRALEYMGLQANQPITSIYVDRVFIGSCTNSRIEDIRAAAEVVKGKQKAANVKEAIVVPGSGVVKAQAEAEGLDKIFTAAGIEWREPGCSMCLAMNADKLGAGEHCASTSNRNFEGRQGYGGRTHLVSPAMAAAAAIAGHFVDVRSFN.

Residues cysteine 353, cysteine 414, and cysteine 417 each contribute to the [4Fe-4S] cluster site.

This sequence belongs to the aconitase/IPM isomerase family. LeuC type 1 subfamily. In terms of assembly, heterodimer of LeuC and LeuD. [4Fe-4S] cluster serves as cofactor.

The enzyme catalyses (2R,3S)-3-isopropylmalate = (2S)-2-isopropylmalate. Its pathway is amino-acid biosynthesis; L-leucine biosynthesis; L-leucine from 3-methyl-2-oxobutanoate: step 2/4. Catalyzes the isomerization between 2-isopropylmalate and 3-isopropylmalate, via the formation of 2-isopropylmaleate. This chain is 3-isopropylmalate dehydratase large subunit, found in Cellvibrio japonicus (strain Ueda107) (Pseudomonas fluorescens subsp. cellulosa).